A 136-amino-acid polypeptide reads, in one-letter code: Putative pre-16S rRNA nuclease (136 aa).

The protein belongs to the YqgF nuclease family.

Its subcellular location is the cytoplasm. Its function is as follows. Could be a nuclease involved in processing of the 5'-end of pre-16S rRNA. The protein is Putative pre-16S rRNA nuclease of Francisella tularensis subsp. tularensis (strain WY96-3418).